The sequence spans 264 residues: Glutamate racemase (264 aa).

Residues 9–10 (DS) and 41–42 (YG) each bind substrate. The active-site Proton donor/acceptor is the cysteine 72. 73 to 74 (NT) serves as a coordination point for substrate. The active-site Proton donor/acceptor is the cysteine 183. Residue 184 to 185 (TH) participates in substrate binding.

This sequence belongs to the aspartate/glutamate racemases family.

It catalyses the reaction L-glutamate = D-glutamate. It functions in the pathway cell wall biogenesis; peptidoglycan biosynthesis. Its function is as follows. Provides the (R)-glutamate required for cell wall biosynthesis. This is Glutamate racemase from Geobacillus sp. (strain WCH70).